A 286-amino-acid chain; its full sequence is Glycine--tRNA ligase alpha subunit (286 aa).

It belongs to the class-II aminoacyl-tRNA synthetase family. Tetramer of two alpha and two beta subunits.

The protein localises to the cytoplasm. It carries out the reaction tRNA(Gly) + glycine + ATP = glycyl-tRNA(Gly) + AMP + diphosphate. This is Glycine--tRNA ligase alpha subunit from Thermotoga neapolitana (strain ATCC 49049 / DSM 4359 / NBRC 107923 / NS-E).